We begin with the raw amino-acid sequence, 469 residues long: Aspartyl/glutamyl-tRNA(Asn/Gln) amidotransferase subunit B (469 aa).

It belongs to the GatB/GatE family. GatB subfamily. As to quaternary structure, heterotrimer of A, B and C subunits.

The enzyme catalyses L-glutamyl-tRNA(Gln) + L-glutamine + ATP + H2O = L-glutaminyl-tRNA(Gln) + L-glutamate + ADP + phosphate + H(+). It carries out the reaction L-aspartyl-tRNA(Asn) + L-glutamine + ATP + H2O = L-asparaginyl-tRNA(Asn) + L-glutamate + ADP + phosphate + 2 H(+). Functionally, allows the formation of correctly charged Asn-tRNA(Asn) or Gln-tRNA(Gln) through the transamidation of misacylated Asp-tRNA(Asn) or Glu-tRNA(Gln) in organisms which lack either or both of asparaginyl-tRNA or glutaminyl-tRNA synthetases. The reaction takes place in the presence of glutamine and ATP through an activated phospho-Asp-tRNA(Asn) or phospho-Glu-tRNA(Gln). The sequence is that of Aspartyl/glutamyl-tRNA(Asn/Gln) amidotransferase subunit B from Methanococcus maripaludis (strain DSM 14266 / JCM 13030 / NBRC 101832 / S2 / LL).